We begin with the raw amino-acid sequence, 393 residues long: SET domain-containing protein DDB_G0283443 (393 aa).

Positions 17–312 constitute an SET domain; sequence KKIEINETLE…KGDELSISYI (296 aa).

Belongs to the class V-like SAM-binding methyltransferase superfamily.

Functionally, probable methyltransferase. This chain is SET domain-containing protein DDB_G0283443, found in Dictyostelium discoideum (Social amoeba).